Consider the following 392-residue polypeptide: MAKSKFERNKPHVNIGTIGHVDHGKTSLTAAITKYFGEFKAYDQIDAAPEEKARGITISTAHVEYETPARHYAHVDCPGHADYVKNMITGAAQMDGAILVCSAADGPMPQTREHILLARQVGVPAIVVFLNKVDQVDDAELLELVELEVRELLSSYDFPGDDIPVVKGSALAALEDSDKKIGEDAIRELMAAVDSYIPTPERPVDQPFLMPIEDVFSISGRGTVVTGRVERGIIKVGEEVEIVGIRPTSKTTVTGVEMFRKLLDQGQAGDNIGALIRGVNRDGVERGQILCKPGSVKPHKKFKAEAYILTKEEGGRHTPFFTNYRPQFYFRTTDVTGIVTLPEGTEMVMPGDNVTVDVELIVPIAMEEKLRFAIREGGRTVGAGIVAIESLE.

One can recognise a tr-type G domain in the interval 10-201 (KPHVNIGTIG…AVDSYIPTPE (192 aa)). Positions 19–26 (GHVDHGKT) are G1. 19-26 (GHVDHGKT) lines the GTP pocket. T26 serves as a coordination point for Mg(2+). Positions 55 to 59 (GITIS) are G2. A G3 region spans residues 76-79 (DCPG). GTP is bound by residues 76-80 (DCPGH) and 131-134 (NKVD). The G4 stretch occupies residues 131–134 (NKVD). The interval 169–171 (SAL) is G5.

This sequence belongs to the TRAFAC class translation factor GTPase superfamily. Classic translation factor GTPase family. EF-Tu/EF-1A subfamily. Monomer.

It localises to the cytoplasm. The enzyme catalyses GTP + H2O = GDP + phosphate + H(+). In terms of biological role, GTP hydrolase that promotes the GTP-dependent binding of aminoacyl-tRNA to the A-site of ribosomes during protein biosynthesis. This chain is Elongation factor Tu 2, found in Rhizobium etli (strain ATCC 51251 / DSM 11541 / JCM 21823 / NBRC 15573 / CFN 42).